A 263-amino-acid polypeptide reads, in one-letter code: 3-methyl-2-oxobutanoate hydroxymethyltransferase (263 aa).

Residues aspartate 45 and aspartate 84 each coordinate Mg(2+). Residues 45 to 46 (DS), aspartate 84, and lysine 112 each bind 3-methyl-2-oxobutanoate. Residue glutamate 114 coordinates Mg(2+). Residue glutamate 180 is the Proton acceptor of the active site.

Belongs to the PanB family. As to quaternary structure, homodecamer; pentamer of dimers. Mg(2+) is required as a cofactor.

The protein resides in the cytoplasm. The catalysed reaction is 3-methyl-2-oxobutanoate + (6R)-5,10-methylene-5,6,7,8-tetrahydrofolate + H2O = 2-dehydropantoate + (6S)-5,6,7,8-tetrahydrofolate. Its pathway is cofactor biosynthesis; (R)-pantothenate biosynthesis; (R)-pantoate from 3-methyl-2-oxobutanoate: step 1/2. Catalyzes the reversible reaction in which hydroxymethyl group from 5,10-methylenetetrahydrofolate is transferred onto alpha-ketoisovalerate to form ketopantoate. This is 3-methyl-2-oxobutanoate hydroxymethyltransferase from Enterobacter sp. (strain 638).